Consider the following 446-residue polypeptide: MEYTSSPKPQLSSRANAFSIAALMSSGKTKDKESEENTIKPLEQFVEKSSCHPNLGDLPPLETHSDFSSGGGTGSGAPLCTEPLIPTTPGVPSEEMAKISCSLETKELWDKFHELGTEMIITKSGRRMFPTIRVSFSGVDPDAKYIVLMDIVPVDNKRYRYAYHRSSWLVAGKADPPLPARLYVHPDSPFTGEQLLKQMVSFEKVKLTNNELDQHGHIILNSMHKYQPRVHIIKKKDHTASLLNLKSEEFRTFVFTETVFTAVTAYQNQLITRLKIDSNPFAKGFRDSSRLTDIERESVESLIHKHSYARSPIRTYAGDEETLGEEGHSAHSRGSAFTASDNLSLSSWVTTTSGFSGFQHPQSLSAIGTSTASLASPLPHPIQGSLPPYSRLGMPLTPSALASSMQATGPTFPSFHMPRYHHYFQQGPYAAIQGLRHSSTVMTPFV.

The tract at residues 50-80 is disordered; the sequence is SCHPNLGDLPPLETHSDFSSGGGTGSGAPLC. Residues 108–287 constitute a DNA-binding region (T-box); that stretch reads LWDKFHELGT…SNPFAKGFRD (180 aa).

It localises to the nucleus. In terms of biological role, transcriptional regulator that may play a very early role in the differentiation of the cardiac precursors. The sequence is that of T-box transcription factor TBX20 (tbx20) from Danio rerio (Zebrafish).